The chain runs to 263 residues: Large ribosomal subunit protein uL23m (263 aa).

A mitochondrion-targeting transit peptide spans 1–45 (MPRLTVGTKNMLYPLQKTLAVGSCKPEQVPIRSLASVVESSSKIL).

The protein belongs to the universal ribosomal protein uL23 family. In terms of assembly, component of the mitochondrial large ribosomal subunit (mt-LSU). Mature yeast 74S mitochondrial ribosomes consist of a small (37S) and a large (54S) subunit. The 37S small subunit contains a 15S ribosomal RNA (15S mt-rRNA) and 34 different proteins. The 54S large subunit contains a 21S rRNA (21S mt-rRNA) and 46 different proteins. uL23m forms the wall of the exit tunnel. Interacts with the C-terminus of OXA1.

The protein resides in the mitochondrion. Component of the mitochondrial ribosome (mitoribosome), a dedicated translation machinery responsible for the synthesis of mitochondrial genome-encoded proteins, including at least some of the essential transmembrane subunits of the mitochondrial respiratory chain. The mitoribosomes are attached to the mitochondrial inner membrane and translation products are cotranslationally integrated into the membrane. This Saccharomyces cerevisiae (strain ATCC 204508 / S288c) (Baker's yeast) protein is Large ribosomal subunit protein uL23m (MRP20).